A 1184-amino-acid chain; its full sequence is C5a peptidase (1184 aa).

The first 31 residues, 1–31, serve as a signal peptide directing secretion; that stretch reads MRKKQKLPFDKLAIALMSTSILLNAQSDIKA. Polar residues-rich tracts occupy residues 33 to 52 and 89 to 100; these read TVTE…QPTA and AKTTDTPATSKA. Positions 33-117 are disordered; that stretch reads TVTEDTPATE…PSQVKTLQEK (85 aa). The Peptidase S8 domain maps to 99–581; it reads KATIRDLNDP…AGAVDAKKAS (483 aa). Catalysis depends on charge relay system residues aspartate 130, histidine 193, and serine 512. Basic and acidic residues-rich tracts occupy residues 1029-1054, 1061-1071, 1078-1088, and 1095-1107; these read EGHS…KPEQ, PDKKPETKPEQ, PDKKPEAKPEQ, and PDKK…EKDS. Residues 1029–1150 form a disordered region; it reads EGHSNKPEQD…RDQLPTTNDK (122 aa). 4 repeat units span residues 1034 to 1067, 1068 to 1084, 1085 to 1101, and 1102 to 1118. Positions 1034 to 1118 are 4 X 17 AA tandem repeats; it reads KPEQDGSDQV…GQTPGKTPQK (85 aa). A compositionally biased stretch (polar residues) spans 1109–1123; sequence GQTPGKTPQKGQPSR. An LPXTG sorting signal motif is present at residues 1144–1148; sequence LPTTN. At threonine 1147 the chain carries Pentaglycyl murein peptidoglycan amidated threonine. Positions 1148–1184 are cleaved as a propeptide — removed by sortase; that stretch reads NDKDTNRLHLLKLVMTTFFFGLVAHIFKTKRQKETKK.

Belongs to the peptidase S8 family. Post-translationally, cleaved by SpeB protease; leading to its degradation. Degradation by SpeB is probably strictly regulated to preserve integrity of C5a peptidase.

It localises to the secreted. It is found in the cell wall. It carries out the reaction The primary cleavage site is at 67-His-|-Lys-68 in human C5a with a minor secondary cleavage site at 58-Ala-|-Ser-59.. In terms of biological role, this virulence factor of S.pyogenes specifically cleaves the human serum chemotaxin C5a at '68-Lys-|-Asp-69' bond near its C-terminus, destroying its ability to serve as a chemoattractant. The polypeptide is C5a peptidase (scpA) (Streptococcus pyogenes serotype M6 (strain ATCC BAA-946 / MGAS10394)).